Here is a 213-residue protein sequence, read N- to C-terminus: 3-demethoxyubiquinol 3-hydroxylase (213 aa).

Residues glutamate 62, glutamate 92, histidine 95, glutamate 144, glutamate 176, and histidine 179 each coordinate Fe cation.

This sequence belongs to the COQ7 family. The cofactor is Fe cation.

It is found in the cell membrane. It catalyses the reaction a 5-methoxy-2-methyl-3-(all-trans-polyprenyl)benzene-1,4-diol + AH2 + O2 = a 3-demethylubiquinol + A + H2O. Its pathway is cofactor biosynthesis; ubiquinone biosynthesis. Functionally, catalyzes the hydroxylation of 2-nonaprenyl-3-methyl-6-methoxy-1,4-benzoquinol during ubiquinone biosynthesis. The polypeptide is 3-demethoxyubiquinol 3-hydroxylase (Legionella pneumophila subsp. pneumophila (strain Philadelphia 1 / ATCC 33152 / DSM 7513)).